Consider the following 1092-residue polypeptide: Elongation factor 3 (1092 aa).

Val92 contributes to the ADP binding site. HEAT repeat units follow at residues 95–133 (MVKT…SPVS), 138–175 (PYMI…RLTP), 177–214 (ATKQ…TAPR), 218–255 (TAVP…LINN), 257–293 (DIEK…EVLP), 294–331 (PTLA…LVEK), and 333–370 (QIIA…KILT). Glu454 is an ADP binding site. ABC transporter domains follow at residues 486–704 (EELC…YYEL) and 730–1044 (LKVQ…DKNK). Residues Asn766, Glu973, Asn976, and His1002 each contribute to the ADP site. Disordered regions lie at residues 1023 to 1044 (TPTG…DKNK) and 1063 to 1092 (SKLS…DDDE). Basic residues predominate over residues 1063–1075 (SKLSGKDLRKKRK). A compositionally biased stretch (basic and acidic residues) spans 1076–1086 (EREARRKRGEE).

This sequence belongs to the ABC transporter superfamily. ABCF family. EF3 subfamily.

The protein resides in the cytoplasm. It localises to the cytosol. It carries out the reaction ATP + H2O = ADP + phosphate + H(+). It participates in protein biosynthesis; polypeptide chain elongation. Ribosome-dependent ATPase that functions in cytoplasmic translation elongation. Required for the ATP-dependent release of deacylated tRNA from the ribosomal E-site during protein biosynthesis. Stimulates the eEF1A-dependent binding of aminoacyl-tRNA to the ribosomal A-site, which has reduced affinity for tRNA as long as the E-site is occupied. Assists translation termination by stimulating the release of nascent protein from the ribosome by release factors. The protein is Elongation factor 3 of Gonapodya prolifera (strain JEL478) (Monoblepharis prolifera).